We begin with the raw amino-acid sequence, 427 residues long: tRNA pseudouridine synthase Pus10 (427 aa).

Aspartate 240 functions as the Nucleophile in the catalytic mechanism. Residues tyrosine 306 and tyrosine 378 each contribute to the substrate site.

The protein belongs to the pseudouridine synthase Pus10 family.

The enzyme catalyses uridine(54) in tRNA = pseudouridine(54) in tRNA. It carries out the reaction uridine(55) in tRNA = pseudouridine(55) in tRNA. In terms of biological role, responsible for synthesis of pseudouridine from uracil-54 and uracil-55 in the psi GC loop of transfer RNAs. This Halorubrum lacusprofundi (strain ATCC 49239 / DSM 5036 / JCM 8891 / ACAM 34) protein is tRNA pseudouridine synthase Pus10.